A 162-amino-acid chain; its full sequence is Phosphopantetheine adenylyltransferase (162 aa).

S9 serves as a coordination point for substrate. Residues 9–10 and H17 contribute to the ATP site; that span reads SF. Positions 41, 73, and 87 each coordinate substrate. ATP-binding positions include 88 to 90, E98, and 123 to 129; these read GLR and YSFISSS.

The protein belongs to the bacterial CoaD family. Homohexamer. Requires Mg(2+) as cofactor.

Its subcellular location is the cytoplasm. It carries out the reaction (R)-4'-phosphopantetheine + ATP + H(+) = 3'-dephospho-CoA + diphosphate. Its pathway is cofactor biosynthesis; coenzyme A biosynthesis; CoA from (R)-pantothenate: step 4/5. Its function is as follows. Reversibly transfers an adenylyl group from ATP to 4'-phosphopantetheine, yielding dephospho-CoA (dPCoA) and pyrophosphate. This chain is Phosphopantetheine adenylyltransferase, found in Carboxydothermus hydrogenoformans (strain ATCC BAA-161 / DSM 6008 / Z-2901).